Here is a 564-residue protein sequence, read N- to C-terminus: Potassium-transporting ATPase potassium-binding subunit (564 aa).

A run of 10 helical transmembrane segments spans residues 7-27, 67-87, 135-155, 179-199, 258-278, 286-306, 382-402, 420-440, 487-507, and 528-548; these read LLIL…GRFF, AWAL…MLML, VGLT…LVAL, LYAL…QGVP, FELV…GHYV, AILG…LWAE, VGLN…GLMI, LLVA…AIAA, LMLS…VLAL, and GLLF…LTFL.

The protein belongs to the KdpA family. The system is composed of three essential subunits: KdpA, KdpB and KdpC.

It is found in the cell inner membrane. In terms of biological role, part of the high-affinity ATP-driven potassium transport (or Kdp) system, which catalyzes the hydrolysis of ATP coupled with the electrogenic transport of potassium into the cytoplasm. This subunit binds the periplasmic potassium ions and delivers the ions to the membrane domain of KdpB through an intramembrane tunnel. This chain is Potassium-transporting ATPase potassium-binding subunit, found in Pseudomonas syringae pv. tomato (strain ATCC BAA-871 / DC3000).